The primary structure comprises 283 residues: Secretory carrier-associated membrane protein 2 (283 aa).

Residues 1-47 (MARHDPNPFADEEINPFANHTSVPPASNSYLKPLPPEPYDRGATVDI) form a disordered region. Over 1–123 (MARHDPNPFA…LQKIQYVAFT (123 aa)) the chain is Cytoplasmic. Residues 18-30 (ANHTSVPPASNSY) are compositionally biased toward polar residues. A coiled-coil region spans residues 50–87 (DSGNDLRAKEMELQAKENELKRKEQELKRREDAIARTG). 4 helical membrane-spanning segments follow: residues 124–144 (TLLGLVGCLLWNIVAVTVAWI), 151–171 (IWLLSIIYFLAGVPGAYVLWY), 186–206 (FGAFFFFYVFHIAFCGFAAVA), and 234–254 (IMYFIGAGFFCIETLLNIWVI). Residues 255–283 (QQVYAYFRGSGKAAEMKREATKSTLMRAL) lie on the Cytoplasmic side of the membrane.

It belongs to the SCAMP family.

The protein resides in the cell membrane. It localises to the cytoplasmic vesicle. It is found in the secretory vesicle membrane. Its function is as follows. Probably involved in membrane trafficking. This chain is Secretory carrier-associated membrane protein 2 (SCAMP2), found in Arabidopsis thaliana (Mouse-ear cress).